The primary structure comprises 266 residues: MGLHSTADAAAIRASIRSGAFGGHTSGMAPGKLQCNLAILPAAHALDFLRFCQRNPKPCPVVGVSETGDPMLPTLGVDIDIRTDVPRYRIFRDGVLTGEVTDIRDLWTDDLVSVALGCSFTFENALVRAGIPVRHIEDGVNVPMFRTNIPLVPAGPFNGHMVVTMRPIPEAMVDKAHGISARFPQAHGAPIATGDPRALGIADLAKPDYGDAVAVKPGEVPVFWACGVTPQNVLRDARLPLCITHSPGHMLISDVAEDAETPIYQS.

It belongs to the D-glutamate cyclase family.

The sequence is that of Putative hydro-lyase Jann_2570 from Jannaschia sp. (strain CCS1).